We begin with the raw amino-acid sequence, 247 residues long: MKIVGVIPARFGSTRFPGKPLVNLKGRPLIQWTVEGAKKSKLLSEVIVATDHEGIKAAAEAVGVKVVMTDSDLPTGSDRINAAIKDVACDVVVNIQGDEPLVTGELIDRLAQVFVDDPKMDMATLAHPISAEELQSMNSVKVVVNCRDEALYFSRYPMPYSRMSAQEAGSMDGCLKHIGMYAYSRNFLKQFCEAPPALIEKAESLEQLRALYLGAKIKVIRVKEASVGVDTPEDLARLEKLLSSQGM.

It belongs to the KdsB family.

The protein localises to the cytoplasm. It catalyses the reaction 3-deoxy-alpha-D-manno-oct-2-ulosonate + CTP = CMP-3-deoxy-beta-D-manno-octulosonate + diphosphate. Its pathway is nucleotide-sugar biosynthesis; CMP-3-deoxy-D-manno-octulosonate biosynthesis; CMP-3-deoxy-D-manno-octulosonate from 3-deoxy-D-manno-octulosonate and CTP: step 1/1. It participates in bacterial outer membrane biogenesis; lipopolysaccharide biosynthesis. Its function is as follows. Activates KDO (a required 8-carbon sugar) for incorporation into bacterial lipopolysaccharide in Gram-negative bacteria. The protein is 3-deoxy-manno-octulosonate cytidylyltransferase of Bdellovibrio bacteriovorus (strain ATCC 15356 / DSM 50701 / NCIMB 9529 / HD100).